Here is a 217-residue protein sequence, read N- to C-terminus: Trichothecene biosynthesis transcription regulator TRI6 (217 aa).

A C2H2-type zinc finger spans residues 185 to 215 (VRCPWHDQEGQQCLRVFSRVDNMRDHYRRIH).

The protein localises to the nucleus. Transcriptional activator of part of the core trichothecene biosynthesis cluster. This is Trichothecene biosynthesis transcription regulator TRI6 from Fusarium sporotrichioides.